A 434-amino-acid polypeptide reads, in one-letter code: Perilipin-3 (434 aa).

Residues 1–22 are disordered; the sequence is MSADGAEADGSTQVTVEEPVQQ. Position 2 is an N-acetylserine (serine 2). At serine 31 the chain carries Phosphoserine. Lysine 65 carries the N6-acetyllysine modification. Serine 91 bears the Phosphoserine mark. Lysine 122 is covalently cross-linked (Glycyl lysine isopeptide (Lys-Gly) (interchain with G-Cter in SUMO1)). Phosphoserine occurs at positions 130 and 148. At threonine 170 the chain carries Phosphothreonine. Phosphoserine is present on residues serine 175 and serine 179. Threonine 216 is subject to Phosphothreonine. Serine 217 and serine 241 each carry phosphoserine. At tyrosine 251 the chain carries Phosphotyrosine. Coiled-coil stretches lie at residues 252-280 and 353-377; these read EHSL…SLME and TNVK…SSIH.

The protein belongs to the perilipin family. As to quaternary structure, homooligomer. Interacts with M6PR (via the cytoplasmic domain). Interacts with IGF2R (via the cytoplasmic domain). Phosphorylation at Tyr-251 by isoform 1 of CHKA (CHKalpha2) promotes dissociation from lipid droplets: dissociation is followed by recruitment of autophagosome machinery to lipid droplets and subsequent lipid droplet lipolysis.

Its subcellular location is the lipid droplet. The protein resides in the endosome membrane. It is found in the cytoplasm. Structural component of lipid droplets, which is required for the formation and maintenance of lipid storage droplets. Required for the transport of mannose 6-phosphate receptors (MPR) from endosomes to the trans-Golgi network. In Pongo abelii (Sumatran orangutan), this protein is Perilipin-3 (PLIN3).